Consider the following 187-residue polypeptide: UPF0301 protein Noc_0368 (187 aa).

This sequence belongs to the UPF0301 (AlgH) family.

The chain is UPF0301 protein Noc_0368 from Nitrosococcus oceani (strain ATCC 19707 / BCRC 17464 / JCM 30415 / NCIMB 11848 / C-107).